Reading from the N-terminus, the 162-residue chain is NADH-quinone oxidoreductase subunit I 2 (162 aa).

4Fe-4S ferredoxin-type domains lie at 53–83 and 93–122; these read LRRY…IDSE and TRYD…ETRI. [4Fe-4S] cluster contacts are provided by Cys63, Cys66, Cys69, Cys73, Cys102, Cys105, Cys108, and Cys112.

It belongs to the complex I 23 kDa subunit family. NDH-1 is composed of 14 different subunits. Subunits NuoA, H, J, K, L, M, N constitute the membrane sector of the complex. [4Fe-4S] cluster is required as a cofactor.

The protein resides in the cell inner membrane. The enzyme catalyses a quinone + NADH + 5 H(+)(in) = a quinol + NAD(+) + 4 H(+)(out). Its function is as follows. NDH-1 shuttles electrons from NADH, via FMN and iron-sulfur (Fe-S) centers, to quinones in the respiratory chain. The immediate electron acceptor for the enzyme in this species is believed to be ubiquinone. Couples the redox reaction to proton translocation (for every two electrons transferred, four hydrogen ions are translocated across the cytoplasmic membrane), and thus conserves the redox energy in a proton gradient. The chain is NADH-quinone oxidoreductase subunit I 2 from Nitrosococcus oceani (strain ATCC 19707 / BCRC 17464 / JCM 30415 / NCIMB 11848 / C-107).